We begin with the raw amino-acid sequence, 31 residues long: Photosystem II reaction center protein T (31 aa).

The chain crosses the membrane as a helical span at residues 3 to 23 (ALVYTFLLVGTLGIIFFAIFF).

It belongs to the PsbT family. PSII is composed of 1 copy each of membrane proteins PsbA, PsbB, PsbC, PsbD, PsbE, PsbF, PsbH, PsbI, PsbJ, PsbK, PsbL, PsbM, PsbT, PsbY, PsbZ, Psb30/Ycf12, at least 3 peripheral proteins of the oxygen-evolving complex and a large number of cofactors. It forms dimeric complexes.

The protein resides in the plastid. The protein localises to the chloroplast thylakoid membrane. Its function is as follows. Found at the monomer-monomer interface of the photosystem II (PS II) dimer, plays a role in assembly and dimerization of PSII. PSII is a light-driven water plastoquinone oxidoreductase, using light energy to abstract electrons from H(2)O, generating a proton gradient subsequently used for ATP formation. The sequence is that of Photosystem II reaction center protein T from Mesostigma viride (Green alga).